The following is an 857-amino-acid chain: MDTTPELLLCQRIRDKLKADKQVLFAEFDANNQVNPLVTKLRRAVDVALTEAWTGLELPGDVALVAVGGYGRGELFPHSDVDVLLLLPGEPDAKMAAKLERFIGLCWDLGLEIGSSVRTVDDCIRESAADITIRTSLLEARLLIGNKALFKSLQTRYQADMDAADFFQAKLLEMRQRHAKYQDTPYALEPNCKESPGGLRDLQVILWMTEAARLGDSWKQLFERGLLTEREAQELTRNERLLRTIRARLHLLAGRRQDVLVFDLQTALAEAFGYRQTTNKRASEQLMRRYYWAAKAVTQLNSVLLLNIEAMLFPSESMVTREINDRFVERQGMLEITSDDLYERNPHAILETFLLYERTPGVKGLSPRTLRGLYNARTVMDASWRNDPVNRRLFLAIVQEPQGITHALRLMNQTSVLGRYLINFRRIVGQMQHDLFHVYTVDQHILMVVRNMRRFAIVEHTHEFPFCSQLMAGFDRPWVLWVAALFHDIAKGRGGDHSKLGTVDARRFCKQHGISREDTDLIAWLVEHHLTMSHVAQKQDLTDPDVVKAFAQVVGNGRYLTALYLLTVADIRGTSPKVWNAWKGKLLEDLYRITLRVLGGARLDTHSLWAQKRDDTIAQLRLKAFDPELAKPLWDKLDMSFFMRQDARDIAWLTRSLFNKVNSPNPVVKARISPAGEGLQVAVYVKDQPDLFARICGYFERKAFSIQDAKIETTRDGYALDTFQITDPGLAGDYRDILTLVEHELGERVRLECPLPDPTQGRLSRQSRSFPIKPRVDLRPDERGQYYLLSVSANDRTGLLYAIARVLAKHRVSVHSARINTLGERVEDVFLVDGSRLAADNRLQIQLEQDLLDALAI.

The interval 1–322 (MDTTPELLLC…FPSESMVTRE (322 aa)) is uridylyltransferase. The segment at 323–679 (INDRFVERQG…ARISPAGEGL (357 aa)) is uridylyl-removing. The region spanning 441–563 (VDQHILMVVR…VGNGRYLTAL (123 aa)) is the HD domain. 2 ACT domains span residues 680 to 760 (QVAV…DPTQ) and 788 to 857 (LLSV…ALAI).

Belongs to the GlnD family. Mg(2+) serves as cofactor.

The enzyme catalyses [protein-PII]-L-tyrosine + UTP = [protein-PII]-uridylyl-L-tyrosine + diphosphate. It carries out the reaction [protein-PII]-uridylyl-L-tyrosine + H2O = [protein-PII]-L-tyrosine + UMP + H(+). Uridylyltransferase (UTase) activity is inhibited by glutamine, while glutamine activates uridylyl-removing (UR) activity. Its function is as follows. Modifies, by uridylylation and deuridylylation, the PII regulatory proteins (GlnB and homologs), in response to the nitrogen status of the cell that GlnD senses through the glutamine level. Under low glutamine levels, catalyzes the conversion of the PII proteins and UTP to PII-UMP and PPi, while under higher glutamine levels, GlnD hydrolyzes PII-UMP to PII and UMP (deuridylylation). Thus, controls uridylylation state and activity of the PII proteins, and plays an important role in the regulation of nitrogen assimilation and metabolism. The sequence is that of Bifunctional uridylyltransferase/uridylyl-removing enzyme from Cupriavidus metallidurans (strain ATCC 43123 / DSM 2839 / NBRC 102507 / CH34) (Ralstonia metallidurans).